The sequence spans 154 residues: Putative esterase AF_2264 (154 aa).

This sequence belongs to the thioesterase PaaI family.

This Archaeoglobus fulgidus (strain ATCC 49558 / DSM 4304 / JCM 9628 / NBRC 100126 / VC-16) protein is Putative esterase AF_2264.